The primary structure comprises 52 residues: uncharacterized protein (52 aa).

Positions Leu24 to Ala52 are disordered.

This is an uncharacterized protein from Treponema pallidum (strain Nichols).